A 186-amino-acid polypeptide reads, in one-letter code: Signal peptidase I (186 aa).

Residues 1-19 (MTEEKSTNKKNSLFEWVKA) lie on the Cytoplasmic side of the membrane. The chain crosses the membrane as a helical span at residues 20-40 (IIIAVVLALLIRAFLFEPYLV). The Extracellular portion of the chain corresponds to 41 to 186 (EGTSMDPTLH…FPFNEIRKTD (146 aa)). Catalysis depends on residues Ser-44 and Lys-86.

This sequence belongs to the peptidase S26 family.

Its subcellular location is the cell membrane. The catalysed reaction is Cleavage of hydrophobic, N-terminal signal or leader sequences from secreted and periplasmic proteins.. This is Signal peptidase I (lepB) from Bacillus licheniformis.